Consider the following 295-residue polypeptide: Ankyrin repeat and SOCS box protein 17 (295 aa).

The stretch at 146–176 (SGITPLFYVAQTRQSNIFKILLQYGILEREK) is one ANK repeat. The SOCS box domain occupies 232 to 295 (LGRRPIISNW…RLQNYLNLEI (64 aa)).

The protein belongs to the ankyrin SOCS box (ASB) family.

It participates in protein modification; protein ubiquitination. Its function is as follows. May be a substrate-recognition component of a SCF-like ECS (Elongin-Cullin-SOCS-box protein) E3 ubiquitin-protein ligase complex which mediates the ubiquitination and subsequent proteasomal degradation of target proteins. The polypeptide is Ankyrin repeat and SOCS box protein 17 (ASB17) (Macaca fascicularis (Crab-eating macaque)).